Consider the following 225-residue polypeptide: GrpE protein homolog 2, mitochondrial (225 aa).

The transit peptide at 1-32 (MAVRSLWAGRLRVQRLLAWSAAWESKGWPLPF) directs the protein to the mitochondrion. K142 is modified (N6-acetyllysine).

Belongs to the GrpE family. As to quaternary structure, probable component of the PAM complex at least composed of a mitochondrial HSP70 protein, GRPEL1 or GRPEL2, TIMM44, TIMM16/PAM16 and TIMM14/DNAJC19.

The protein resides in the mitochondrion matrix. In terms of biological role, essential component of the PAM complex, a complex required for the translocation of transit peptide-containing proteins from the inner membrane into the mitochondrial matrix in an ATP-dependent manner. Seems to control the nucleotide-dependent binding of mitochondrial HSP70 to substrate proteins. Stimulates ATPase activity of mt-HSP70. May also serve to modulate the interconversion of oligomeric (inactive) and monomeric (active) forms of mt-HSP70. The sequence is that of GrpE protein homolog 2, mitochondrial (GRPEL2) from Homo sapiens (Human).